A 740-amino-acid polypeptide reads, in one-letter code: Elongation factor 2 (740 aa).

The 242-residue stretch at 23 to 264 (AQIRNAGTLA…MIIEHVPPPN (242 aa)) folds into the tr-type G domain. GTP-binding positions include 32 to 39 (AHVDHGKT), 98 to 102 (DTPGH), and 152 to 155 (NKID). Position 605 is a diphthamide (histidine 605).

This sequence belongs to the TRAFAC class translation factor GTPase superfamily. Classic translation factor GTPase family. EF-G/EF-2 subfamily.

The protein resides in the cytoplasm. Its function is as follows. Catalyzes the GTP-dependent ribosomal translocation step during translation elongation. During this step, the ribosome changes from the pre-translocational (PRE) to the post-translocational (POST) state as the newly formed A-site-bound peptidyl-tRNA and P-site-bound deacylated tRNA move to the P and E sites, respectively. Catalyzes the coordinated movement of the two tRNA molecules, the mRNA and conformational changes in the ribosome. The protein is Elongation factor 2 of Pyrobaculum islandicum (strain DSM 4184 / JCM 9189 / GEO3).